The chain runs to 921 residues: uncharacterized protein (921 aa).

The segment at 334-628 (MTKRKFLSID…NLKSIYYDFF (295 aa)) is kinase-like. Residues 401-494 (GSSEWSFGSS…NNNNSDGSSG (94 aa)) are compositionally biased toward low complexity. Disordered stretches follow at residues 401–499 (GSSE…DNRN) and 664–711 (NLYS…NSNS).

This is an uncharacterized protein from Dictyostelium discoideum (Social amoeba).